A 230-amino-acid polypeptide reads, in one-letter code: Eukaryotic translation initiation factor 4E-1 (230 aa).

A disordered region spans residues 1-53 (MVVEDSQKSTITDEQNPSRVDNDDDDLEDGEILEDADDAASAASKPPSAFLRN). A compositionally biased stretch (polar residues) spans 8–19 (KSTITDEQNPSR). Positions 22–38 (NDDDDLEDGEILEDADD) are enriched in acidic residues. The span at 39–49 (AASAASKPPSA) shows a compositional bias: low complexity. EIF4G-binding stretches follow at residues 55-58 (HPLE) and 65-101 (FDNPSAKSKQAAWGSSIRPIYTFSTVEEFWSIYNNIH). Residues 73–78 (KQAAWG), Lys-105, and 123–124 (WE) each bind mRNA. A disulfide bridge connects residues Cys-128 and Cys-166. An EIF4G-binding region spans residues 149–158 (YTLLAMIGEQ). MRNA-binding positions include 173-178 (RNRQDK) and 218-222 (KKHER).

This sequence belongs to the eukaryotic initiation factor 4E family. EIF4F is a multi-subunit complex, the composition of which varies with external and internal environmental conditions. It is composed of at least EIF4A, EIF4E and EIF4G. EIF4E is also known to interact with other partners. In higher plants two isoforms of EIF4F have been identified, named isoform EIF4F and isoform EIF(iso)4F. Isoform EIF4F has subunits p220 and p26, whereas isoform EIF(iso)4F has subunits p82 and p28. In terms of assembly, (Microbial infection) Interacts with potyvirus viral genome-linked protein (VPg); this interaction is possible in susceptible hosts but impaired in resistant plants. Post-translationally, according to the redox status, the Cys-128-Cys-166 disulfide bridge may have a role in regulating protein function by affecting its ability to bind capped mRNA.

Its subcellular location is the nucleus. The protein localises to the cytoplasm. Component of the protein complex eIF4F, which is involved in the recognition of the mRNA cap, ATP-dependent unwinding of 5'-terminal secondary structure and recruitment of mRNA to the ribosome. Recognizes and binds the 7-methylguanosine-containing mRNA cap during an early step in the initiation of protein synthesis and facilitates ribosome binding by inducing the unwinding of the mRNAs secondary structures. Key component of recessive resistance to potyviruses. In terms of biological role, (Microbial infection) Susceptibility host factor required for viral infection by recruiting viral RNAs to the host ribosomal complex via an interaction with viral genome-linked protein (VPg). This is Eukaryotic translation initiation factor 4E-1 from Phaseolus vulgaris (Kidney bean).